We begin with the raw amino-acid sequence, 355 residues long: Glucose-1-phosphate thymidylyltransferase (355 aa).

Positions 107 and 220 each coordinate Mg(2+).

This sequence belongs to the glucose-1-phosphate thymidylyltransferase family. It depends on Mg(2+) as a cofactor.

The catalysed reaction is dTTP + alpha-D-glucose 1-phosphate + H(+) = dTDP-alpha-D-glucose + diphosphate. It functions in the pathway antibiotic biosynthesis; streptomycin biosynthesis. Its function is as follows. Involved in the biosynthesis of the streptose moiety of streptomycin. Catalyzes the formation of dTDP-glucose, from dTTP and glucose 1-phosphate, as well as its pyrophosphorolysis. The polypeptide is Glucose-1-phosphate thymidylyltransferase (strD) (Streptomyces griseus).